Here is a 141-residue protein sequence, read N- to C-terminus: ATP synthase epsilon chain (141 aa).

Belongs to the ATPase epsilon chain family. As to quaternary structure, F-type ATPases have 2 components, CF(1) - the catalytic core - and CF(0) - the membrane proton channel. CF(1) has five subunits: alpha(3), beta(3), gamma(1), delta(1), epsilon(1). CF(0) has three main subunits: a, b and c.

The protein localises to the cell inner membrane. Its function is as follows. Produces ATP from ADP in the presence of a proton gradient across the membrane. This is ATP synthase epsilon chain from Pseudomonas savastanoi pv. phaseolicola (strain 1448A / Race 6) (Pseudomonas syringae pv. phaseolicola (strain 1448A / Race 6)).